Consider the following 1303-residue polypeptide: DNA-directed RNA polymerase subunit beta' (1303 aa).

Positions 60, 62, 75, and 78 each coordinate Zn(2+). Positions 535, 537, and 539 each coordinate Mg(2+). Zn(2+) is bound by residues Cys876, Cys953, Cys960, and Cys963.

Belongs to the RNA polymerase beta' chain family. The RNAP catalytic core consists of 2 alpha, 1 beta, 1 beta' and 1 omega subunit. When a sigma factor is associated with the core the holoenzyme is formed, which can initiate transcription. The cofactor is Mg(2+). Zn(2+) serves as cofactor.

The catalysed reaction is RNA(n) + a ribonucleoside 5'-triphosphate = RNA(n+1) + diphosphate. Its function is as follows. DNA-dependent RNA polymerase catalyzes the transcription of DNA into RNA using the four ribonucleoside triphosphates as substrates. In Saccharopolyspora erythraea (strain ATCC 11635 / DSM 40517 / JCM 4748 / NBRC 13426 / NCIMB 8594 / NRRL 2338), this protein is DNA-directed RNA polymerase subunit beta'.